A 351-amino-acid chain; its full sequence is Protein Wnt-4 (351 aa).

The signal sequence occupies residues 1–22 (MTPEYFLRSLLMMILAVFSANA). Disulfide bonds link Cys-78/Cys-89, Cys-128/Cys-136, Cys-138/Cys-155, Cys-206/Cys-220, Cys-208/Cys-215, Cys-280/Cys-311, Cys-296/Cys-306, Cys-310/Cys-350, Cys-326/Cys-341, Cys-328/Cys-338, and Cys-333/Cys-334. N-linked (GlcNAc...) asparagine glycosylation is present at Asn-88. A lipid anchor (O-palmitoleoyl serine; by PORCN) is attached at Ser-212. A glycan (N-linked (GlcNAc...) asparagine) is linked at Asn-297.

The protein belongs to the Wnt family. Palmitoleoylation is required for efficient binding to frizzled receptors. Depalmitoleoylation leads to Wnt signaling pathway inhibition. As to expression, expressed in the brain and floor plate. In the developing pronephros, expressed in the proximal tubules and nephrostomes but absent from the pronephric duct.

It is found in the secreted. The protein localises to the extracellular space. It localises to the extracellular matrix. Ligand for members of the frizzled family of seven transmembrane receptors. Plays an important role in embryonic kidney development. Acts downstream of Notch signaling during pronephric kidney development. During early pronephros development, patterns the proximal pronephric anlagen to promote glomus and nephrostome formation. Also required later in pronephros development for tubulogenesis. In Xenopus laevis (African clawed frog), this protein is Protein Wnt-4 (wnt4).